An 890-amino-acid chain; its full sequence is Alanine--tRNA ligase (890 aa).

Zn(2+) is bound by residues His565, His569, Cys677, and His681.

It belongs to the class-II aminoacyl-tRNA synthetase family. Zn(2+) is required as a cofactor.

It localises to the cytoplasm. The enzyme catalyses tRNA(Ala) + L-alanine + ATP = L-alanyl-tRNA(Ala) + AMP + diphosphate. In terms of biological role, catalyzes the attachment of alanine to tRNA(Ala) in a two-step reaction: alanine is first activated by ATP to form Ala-AMP and then transferred to the acceptor end of tRNA(Ala). Also edits incorrectly charged Ser-tRNA(Ala) and Gly-tRNA(Ala) via its editing domain. In Zymomonas mobilis subsp. mobilis (strain ATCC 31821 / ZM4 / CP4), this protein is Alanine--tRNA ligase.